Consider the following 561-residue polypeptide: Potassium-transporting ATPase potassium-binding subunit (561 aa).

Transmembrane regions (helical) follow at residues 5–25 (IELF…GTYM), 63–83 (KYAL…YFIL), 103–122 (LAFN…HYAG), 133–153 (IVIV…AAAI), 179–199 (LLPI…PQTF), 255–275 (IEML…GLMI), 281–301 (ALVL…GAVY), 380–400 (AGLQ…GLMV), 418–438 (LIAL…ALTV), 485–505 (IMTG…MLAV), and 531–551 (AIFI…AVIL).

Belongs to the KdpA family. In terms of assembly, the system is composed of three essential subunits: KdpA, KdpB and KdpC.

Its subcellular location is the cell membrane. In terms of biological role, part of the high-affinity ATP-driven potassium transport (or Kdp) system, which catalyzes the hydrolysis of ATP coupled with the electrogenic transport of potassium into the cytoplasm. This subunit binds the extracellular potassium ions and delivers the ions to the membrane domain of KdpB through an intramembrane tunnel. The polypeptide is Potassium-transporting ATPase potassium-binding subunit (Caldanaerobacter subterraneus subsp. tengcongensis (strain DSM 15242 / JCM 11007 / NBRC 100824 / MB4) (Thermoanaerobacter tengcongensis)).